A 502-amino-acid polypeptide reads, in one-letter code: Cytochrome P450 71B17 (502 aa).

The helical transmembrane segment at 1-21 (MAISLLCLFLITFVSLTIVGC) threads the bilayer. Residue C444 participates in heme binding.

The protein belongs to the cytochrome P450 family. It depends on heme as a cofactor.

The protein localises to the membrane. This chain is Cytochrome P450 71B17 (CYP71B17), found in Arabidopsis thaliana (Mouse-ear cress).